The primary structure comprises 379 residues: Cytochrome b (379 aa).

4 helical membrane-spanning segments follow: residues 33–53 (FGSLLGMCLMIQILTGLFLAM), 77–98 (WLIRYLHANGASMFFICLFIHV), 113–133 (WNIGIILFFTTMATAFVGYVL), and 178–198 (FFAFHFILPFIITAFVLVHLL). Heme b contacts are provided by His-83 and His-97. 2 residues coordinate heme b: His-182 and His-196. His-201 contacts a ubiquinone. The next 4 membrane-spanning stretches (helical) occupy residues 226–246 (IKDLLGILFLLMALMILALFF), 288–308 (LGGVLALLLSILILMAFPLLN), 320–340 (ITQIIYWILIANLLVLTWIGG), and 347–367 (FTMIGQIASITYFTIILILMP).

This sequence belongs to the cytochrome b family. The cytochrome bc1 complex contains 11 subunits: 3 respiratory subunits (MT-CYB, CYC1 and UQCRFS1), 2 core proteins (UQCRC1 and UQCRC2) and 6 low-molecular weight proteins (UQCRH/QCR6, UQCRB/QCR7, UQCRQ/QCR8, UQCR10/QCR9, UQCR11/QCR10 and a cleavage product of UQCRFS1). This cytochrome bc1 complex then forms a dimer. It depends on heme b as a cofactor.

Its subcellular location is the mitochondrion inner membrane. Its function is as follows. Component of the ubiquinol-cytochrome c reductase complex (complex III or cytochrome b-c1 complex) that is part of the mitochondrial respiratory chain. The b-c1 complex mediates electron transfer from ubiquinol to cytochrome c. Contributes to the generation of a proton gradient across the mitochondrial membrane that is then used for ATP synthesis. This chain is Cytochrome b (MT-CYB), found in Akodon dayi (Day's grass mouse).